The following is an 84-amino-acid chain: Large ribosomal subunit protein bL27 (84 aa).

The segment at 1–21 (MAHKKGGGSTKNGRDSNPKYL) is disordered.

It belongs to the bacterial ribosomal protein bL27 family.

The polypeptide is Large ribosomal subunit protein bL27 (Chlorobaculum parvum (strain DSM 263 / NCIMB 8327) (Chlorobium vibrioforme subsp. thiosulfatophilum)).